Reading from the N-terminus, the 127-residue chain is MRALALDVGLKRIGVALCIDKKIALPLDAVLRKNRNQAANEIKNLLKIHEISLLIVGIPKGGSSEEEMTRRIKHFVSLLEFDKEICFVDESGTSKEALGYGVANTRKKDGKLDSLSAFIMIKDYFAL.

It belongs to the YqgF nuclease family.

It is found in the cytoplasm. Functionally, could be a nuclease involved in processing of the 5'-end of pre-16S rRNA. The chain is Putative pre-16S rRNA nuclease from Campylobacter jejuni subsp. jejuni serotype O:6 (strain 81116 / NCTC 11828).